The sequence spans 339 residues: Ketol-acid reductoisomerase (NADP(+)) (339 aa).

The KARI N-terminal Rossmann domain occupies 1–182 (MRVYYDRDAD…GGGRSGVIET (182 aa)). NADP(+) contacts are provided by residues 24 to 27 (YGSQ), Arg-48, Ser-51, Thr-53, and 83 to 86 (DELQ). Residue His-108 is part of the active site. Residue Gly-134 coordinates NADP(+). The KARI C-terminal knotted domain maps to 183-328 (TFKEECETDL…GKLRAMMPWI (146 aa)). Residues Asp-191, Glu-195, Glu-227, and Glu-231 each contribute to the Mg(2+) site. A substrate-binding site is contributed by Ser-252.

The protein belongs to the ketol-acid reductoisomerase family. Mg(2+) serves as cofactor.

It catalyses the reaction (2R)-2,3-dihydroxy-3-methylbutanoate + NADP(+) = (2S)-2-acetolactate + NADPH + H(+). It carries out the reaction (2R,3R)-2,3-dihydroxy-3-methylpentanoate + NADP(+) = (S)-2-ethyl-2-hydroxy-3-oxobutanoate + NADPH + H(+). The protein operates within amino-acid biosynthesis; L-isoleucine biosynthesis; L-isoleucine from 2-oxobutanoate: step 2/4. It functions in the pathway amino-acid biosynthesis; L-valine biosynthesis; L-valine from pyruvate: step 2/4. In terms of biological role, involved in the biosynthesis of branched-chain amino acids (BCAA). Catalyzes an alkyl-migration followed by a ketol-acid reduction of (S)-2-acetolactate (S2AL) to yield (R)-2,3-dihydroxy-isovalerate. In the isomerase reaction, S2AL is rearranged via a Mg-dependent methyl migration to produce 3-hydroxy-3-methyl-2-ketobutyrate (HMKB). In the reductase reaction, this 2-ketoacid undergoes a metal-dependent reduction by NADPH to yield (R)-2,3-dihydroxy-isovalerate. This chain is Ketol-acid reductoisomerase (NADP(+)), found in Brucella abortus (strain S19).